The following is a 226-amino-acid chain: UPF0758 protein SPJ_1027 (226 aa).

In terms of domain architecture, MPN spans 103-225 (SILSSQKLAK…YFSYREKTDL (123 aa)). Zn(2+) contacts are provided by H174, H176, and D187. A JAMM motif motif is present at residues 174–187 (HNHPSGAVAPSQND).

It belongs to the UPF0758 family.

In Streptococcus pneumoniae (strain JJA), this protein is UPF0758 protein SPJ_1027.